The sequence spans 592 residues: 2-succinyl-5-enolpyruvyl-6-hydroxy-3-cyclohexene-1-carboxylate synthase (592 aa).

Belongs to the TPP enzyme family. MenD subfamily. Homodimer. Requires Mg(2+) as cofactor. The cofactor is Mn(2+). Thiamine diphosphate is required as a cofactor.

The catalysed reaction is isochorismate + 2-oxoglutarate + H(+) = 5-enolpyruvoyl-6-hydroxy-2-succinyl-cyclohex-3-ene-1-carboxylate + CO2. It functions in the pathway quinol/quinone metabolism; 1,4-dihydroxy-2-naphthoate biosynthesis; 1,4-dihydroxy-2-naphthoate from chorismate: step 2/7. Its pathway is quinol/quinone metabolism; menaquinone biosynthesis. Functionally, catalyzes the thiamine diphosphate-dependent decarboxylation of 2-oxoglutarate and the subsequent addition of the resulting succinic semialdehyde-thiamine pyrophosphate anion to isochorismate to yield 2-succinyl-5-enolpyruvyl-6-hydroxy-3-cyclohexene-1-carboxylate (SEPHCHC). This is 2-succinyl-5-enolpyruvyl-6-hydroxy-3-cyclohexene-1-carboxylate synthase from Haloarcula marismortui (strain ATCC 43049 / DSM 3752 / JCM 8966 / VKM B-1809) (Halobacterium marismortui).